The primary structure comprises 242 residues: Biosynthetic peptidoglycan transglycosylase (242 aa).

Residues 19-39 traverse the membrane as a helical segment; it reads LMVVLAVFWGGGIALFSVAPV.

The protein belongs to the glycosyltransferase 51 family.

It is found in the cell inner membrane. The catalysed reaction is [GlcNAc-(1-&gt;4)-Mur2Ac(oyl-L-Ala-gamma-D-Glu-L-Lys-D-Ala-D-Ala)](n)-di-trans,octa-cis-undecaprenyl diphosphate + beta-D-GlcNAc-(1-&gt;4)-Mur2Ac(oyl-L-Ala-gamma-D-Glu-L-Lys-D-Ala-D-Ala)-di-trans,octa-cis-undecaprenyl diphosphate = [GlcNAc-(1-&gt;4)-Mur2Ac(oyl-L-Ala-gamma-D-Glu-L-Lys-D-Ala-D-Ala)](n+1)-di-trans,octa-cis-undecaprenyl diphosphate + di-trans,octa-cis-undecaprenyl diphosphate + H(+). The protein operates within cell wall biogenesis; peptidoglycan biosynthesis. Functionally, peptidoglycan polymerase that catalyzes glycan chain elongation from lipid-linked precursors. This is Biosynthetic peptidoglycan transglycosylase from Escherichia coli (strain 55989 / EAEC).